Reading from the N-terminus, the 236-residue chain is Probable transcriptional regulatory protein UU295 (236 aa).

The protein belongs to the TACO1 family.

It localises to the cytoplasm. In Ureaplasma parvum serovar 3 (strain ATCC 700970), this protein is Probable transcriptional regulatory protein UU295.